We begin with the raw amino-acid sequence, 680 residues long: Penicillin-binding protein 2B (680 aa).

Residues 1-8 lie on the Cytoplasmic side of the membrane; it reads MRKFNSHS. Residues 9-29 form a helical membrane-spanning segment; sequence IPIRLNLLFSIVILLFMTIIG. At 30-680 the chain is on the extracellular side; the sequence is RLLYMQVLNK…NLYQKYHPMN (651 aa). Serine 386 acts as the Acyl-ester intermediate in catalysis.

Belongs to the transpeptidase family. In terms of assembly, interacts with MreC in the elongasome.

The protein resides in the cell membrane. Its function is as follows. A transpeptidase that forms peptide cross-links between adjacent glycan strands in cell wall peptidoglycan (PG). Part of the elongasome machinery that synthesizes peripheral PG. In Streptococcus pneumoniae serotype 2 (strain D39 / NCTC 7466), this protein is Penicillin-binding protein 2B.